A 382-amino-acid chain; its full sequence is Lipoyl synthase, mitochondrial (382 aa).

The transit peptide at 1–30 (MHGRRHLAASLARALTYAPSRSISSTPSLL) directs the protein to the mitochondrion. The segment covering 25–34 (STPSLLQTLD) has biased composition (polar residues). The disordered stretch occupies residues 25–47 (STPSLLQTLDPSTPSPAAAPPTA). Positions 112, 117, 123, 143, 147, 150, and 359 each coordinate [4Fe-4S] cluster. One can recognise a Radical SAM core domain in the interval 128 to 348 (ETGTATATIM…RSLGVDMGFR (221 aa)).

The protein belongs to the radical SAM superfamily. Lipoyl synthase family. [4Fe-4S] cluster serves as cofactor.

Its subcellular location is the mitochondrion. It catalyses the reaction [[Fe-S] cluster scaffold protein carrying a second [4Fe-4S](2+) cluster] + N(6)-octanoyl-L-lysyl-[protein] + 2 oxidized [2Fe-2S]-[ferredoxin] + 2 S-adenosyl-L-methionine + 4 H(+) = [[Fe-S] cluster scaffold protein] + N(6)-[(R)-dihydrolipoyl]-L-lysyl-[protein] + 4 Fe(3+) + 2 hydrogen sulfide + 2 5'-deoxyadenosine + 2 L-methionine + 2 reduced [2Fe-2S]-[ferredoxin]. Its pathway is protein modification; protein lipoylation via endogenous pathway; protein N(6)-(lipoyl)lysine from octanoyl-[acyl-carrier-protein]: step 2/2. Functionally, catalyzes the radical-mediated insertion of two sulfur atoms into the C-6 and C-8 positions of the octanoyl moiety bound to the lipoyl domains of lipoate-dependent enzymes, thereby converting the octanoylated domains into lipoylated derivatives. This is Lipoyl synthase, mitochondrial from Oryza sativa subsp. indica (Rice).